A 427-amino-acid polypeptide reads, in one-letter code: Glutamate-1-semialdehyde 2,1-aminomutase (427 aa).

The residue at position 267 (K267) is an N6-(pyridoxal phosphate)lysine.

The protein belongs to the class-III pyridoxal-phosphate-dependent aminotransferase family. HemL subfamily. As to quaternary structure, homodimer. Requires pyridoxal 5'-phosphate as cofactor.

It localises to the cytoplasm. The enzyme catalyses (S)-4-amino-5-oxopentanoate = 5-aminolevulinate. It functions in the pathway porphyrin-containing compound metabolism; protoporphyrin-IX biosynthesis; 5-aminolevulinate from L-glutamyl-tRNA(Glu): step 2/2. This is Glutamate-1-semialdehyde 2,1-aminomutase from Sulfurihydrogenibium azorense (strain DSM 15241 / OCM 825 / Az-Fu1).